The primary structure comprises 595 residues: UvrABC system protein C (595 aa).

The 78-residue stretch at 14–91 (SNPGCYLHKD…IQENMPKFNI (78 aa)) folds into the GIY-YIG domain. The 36-residue stretch at 196 to 231 (DKIVNQLKAKMKDMSDQMEFERAAEYRDLIEAVSTL) folds into the UVR domain.

It belongs to the UvrC family. As to quaternary structure, interacts with UvrB in an incision complex.

The protein resides in the cytoplasm. In terms of biological role, the UvrABC repair system catalyzes the recognition and processing of DNA lesions. UvrC both incises the 5' and 3' sides of the lesion. The N-terminal half is responsible for the 3' incision and the C-terminal half is responsible for the 5' incision. This is UvrABC system protein C from Streptococcus thermophilus (strain CNRZ 1066).